The primary structure comprises 510 residues: Cytochrome P450 4A6 (510 aa).

Residues 1–4 (MSVS) constitute a propeptide that is removed on maturation. Residues Glu-321 and Cys-457 each contribute to the heme site.

It belongs to the cytochrome P450 family. The cofactor is heme. Liver; kidney.

It is found in the endoplasmic reticulum membrane. It localises to the microsome membrane. The enzyme catalyses an omega-methyl-long-chain fatty acid + reduced [NADPH--hemoprotein reductase] + O2 = an omega-hydroxy-long-chain fatty acid + oxidized [NADPH--hemoprotein reductase] + H2O + H(+). Functionally, cytochromes P450 are a group of heme-thiolate monooxygenases. In liver microsomes, this enzyme is involved in an NADPH-dependent electron transport pathway. It oxidizes a variety of structurally unrelated compounds, including steroids, fatty acids, and xenobiotics. In terms of biological role, the kidney P-450 system is rather specialized for the omega-hydroxylation of fatty acids. Both P450-KA1 and P450-KA2 catalyze the omega- and (omega-1)-hydroxylation of various fatty acids with no drug-metabolizing activity, and hydroxylate prostaglandin A1 and A2 solely at the omega-position. This is Cytochrome P450 4A6 (CYP4A6) from Oryctolagus cuniculus (Rabbit).